A 303-amino-acid chain; its full sequence is N-acetyl-D-glucosamine kinase (303 aa).

Residues 4–11 (GFDIGGTK) and 133–140 (GVGGGLIF) each bind ATP. Residues His157, Cys177, Cys179, and Cys184 each contribute to the Zn(2+) site.

It belongs to the ROK (NagC/XylR) family. NagK subfamily.

The enzyme catalyses N-acetyl-D-glucosamine + ATP = N-acetyl-D-glucosamine 6-phosphate + ADP + H(+). Its pathway is cell wall biogenesis; peptidoglycan recycling. Catalyzes the phosphorylation of N-acetyl-D-glucosamine (GlcNAc) derived from cell-wall degradation, yielding GlcNAc-6-P. This chain is N-acetyl-D-glucosamine kinase, found in Escherichia coli O7:K1 (strain IAI39 / ExPEC).